The sequence spans 414 residues: 5-aminolevulinate synthase (414 aa).

The substrate site is built by Arg22, Ser133, and Lys152. Residues Ser185, His213, and Thr241 each contribute to the pyridoxal 5'-phosphate site. Residue Lys244 is part of the active site. Residue Lys244 is modified to N6-(pyridoxal phosphate)lysine. Thr273 and Thr274 together coordinate pyridoxal 5'-phosphate. Substrate is bound at residue Thr359.

It belongs to the class-II pyridoxal-phosphate-dependent aminotransferase family. As to quaternary structure, homodimer. Pyridoxal 5'-phosphate is required as a cofactor.

The catalysed reaction is succinyl-CoA + glycine + H(+) = 5-aminolevulinate + CO2 + CoA. It functions in the pathway porphyrin-containing compound metabolism; protoporphyrin-IX biosynthesis; 5-aminolevulinate from glycine: step 1/1. In Rickettsia conorii (strain ATCC VR-613 / Malish 7), this protein is 5-aminolevulinate synthase (hemA).